Reading from the N-terminus, the 132-residue chain is DNA-directed RNA polymerase subunit omega (132 aa).

The disordered stretch occupies residues 90–109; that stretch reads SSEAGGVLGTSSEEEGSSFD.

It belongs to the RNA polymerase subunit omega family. As to quaternary structure, the RNAP catalytic core consists of 2 alpha, 1 beta, 1 beta' and 1 omega subunit. When a sigma factor is associated with the core the holoenzyme is formed, which can initiate transcription.

The catalysed reaction is RNA(n) + a ribonucleoside 5'-triphosphate = RNA(n+1) + diphosphate. Promotes RNA polymerase assembly. Latches the N- and C-terminal regions of the beta' subunit thereby facilitating its interaction with the beta and alpha subunits. In Bartonella henselae (strain ATCC 49882 / DSM 28221 / CCUG 30454 / Houston 1) (Rochalimaea henselae), this protein is DNA-directed RNA polymerase subunit omega.